Consider the following 762-residue polypeptide: Polyribonucleotide nucleotidyltransferase (762 aa).

Residues aspartate 531 and aspartate 537 each contribute to the Mg(2+) site. The KH domain occupies 597–656 (PRVTTIKVPVDKIGEVIGPKGKVINSITEETRAQISIEDDGTVFVGATDGPSAQAAIDKI). The S1 motif domain occupies 668–737 (GERFLGTVVK…KRGKISLVLV (70 aa)).

The protein belongs to the polyribonucleotide nucleotidyltransferase family. Mg(2+) is required as a cofactor.

The protein localises to the cytoplasm. The enzyme catalyses RNA(n+1) + phosphate = RNA(n) + a ribonucleoside 5'-diphosphate. Its function is as follows. Involved in mRNA degradation. Catalyzes the phosphorolysis of single-stranded polyribonucleotides processively in the 3'- to 5'-direction. The protein is Polyribonucleotide nucleotidyltransferase of Mycobacterium ulcerans (strain Agy99).